The chain runs to 342 residues: Anthranilate phosphoribosyltransferase (342 aa).

5-phospho-alpha-D-ribose 1-diphosphate-binding positions include Gly79, 82 to 83 (GD), Thr87, 89 to 92 (NVST), 107 to 115 (KHGNRSVSS), and Ser119. Gly79 is a binding site for anthranilate. Mg(2+) is bound at residue Ser91. Asn110 provides a ligand contact to anthranilate. Residue Arg165 coordinates anthranilate. Residues Asp223 and Glu224 each contribute to the Mg(2+) site.

The protein belongs to the anthranilate phosphoribosyltransferase family. In terms of assembly, homodimer. Mg(2+) is required as a cofactor.

The catalysed reaction is N-(5-phospho-beta-D-ribosyl)anthranilate + diphosphate = 5-phospho-alpha-D-ribose 1-diphosphate + anthranilate. It participates in amino-acid biosynthesis; L-tryptophan biosynthesis; L-tryptophan from chorismate: step 2/5. Its function is as follows. Catalyzes the transfer of the phosphoribosyl group of 5-phosphorylribose-1-pyrophosphate (PRPP) to anthranilate to yield N-(5'-phosphoribosyl)-anthranilate (PRA). This chain is Anthranilate phosphoribosyltransferase, found in Aeromonas hydrophila subsp. hydrophila (strain ATCC 7966 / DSM 30187 / BCRC 13018 / CCUG 14551 / JCM 1027 / KCTC 2358 / NCIMB 9240 / NCTC 8049).